The primary structure comprises 603 residues: NADH-ubiquinone oxidoreductase chain 5 (603 aa).

The next 15 membrane-spanning stretches (helical) occupy residues 38-58 (SIVA…MCLD), 87-107 (MMFI…SLWY), 122-142 (LIFL…QLFI), 144-160 (WEGV…WWYA), 171-191 (AILY…WFIL), 211-233 (TPLL…HPWL), 241-261 (TPVS…FLLI), 272-292 (LIQT…AVCA), 301-320 (IVAF…IGIN), 325-347 (AFLH…GSII), 370-390 (STSL…TGFY), 407-429 (WALS…MILL), 458-478 (AAGS…ASPF), 482-502 (IPLY…LTAL), and 582-602 (GMIK…LLLI).

The protein belongs to the complex I subunit 5 family. In terms of assembly, core subunit of respiratory chain NADH dehydrogenase (Complex I) which is composed of 45 different subunits.

The protein resides in the mitochondrion inner membrane. It catalyses the reaction a ubiquinone + NADH + 5 H(+)(in) = a ubiquinol + NAD(+) + 4 H(+)(out). Core subunit of the mitochondrial membrane respiratory chain NADH dehydrogenase (Complex I) which catalyzes electron transfer from NADH through the respiratory chain, using ubiquinone as an electron acceptor. Essential for the catalytic activity and assembly of complex I. The protein is NADH-ubiquinone oxidoreductase chain 5 (MT-ND5) of Homo sapiens (Human).